The primary structure comprises 651 residues: Peptide-N(4)-(N-acetyl-beta-glucosaminyl)asparagine amidase (651 aa).

N-acetylalanine is present on alanine 2. The region spanning 30–91 (EASKLLLTYA…EGETHLIFPK (62 aa)) is the PUB domain. Residues cysteine 247, cysteine 250, cysteine 280, and cysteine 283 each coordinate Zn(2+). Residue cysteine 306 is the Nucleophile of the active site. Catalysis depends on residues histidine 333 and aspartate 350. Residues 451–651 (ELGGRVSGSL…LEIIITFNDL (201 aa)) form the PAW domain.

The protein belongs to the transglutaminase-like superfamily. PNGase family. In terms of assembly, component of a complex required to couple retrotranslocation, ubiquitination and deglycosylation composed of NGLY1, SAKS1, AMFR, VCP and RAD23B. Interacts with the proteasome components RAD23B and PSMC1. Interacts with directly with VCP. Interacts with DERL1, bringing it close to the endoplasmic reticulum membrane. Interacts with SAKS1. Zn(2+) serves as cofactor. In terms of tissue distribution, ubiquitously expressed with highest level in testis.

It is found in the cytoplasm. It carries out the reaction Hydrolysis of an N(4)-(acetyl-beta-D-glucosaminyl)asparagine residue in which the glucosamine residue may be further glycosylated, to yield a (substituted) N-acetyl-beta-D-glucosaminylamine and a peptide containing an aspartate residue.. With respect to regulation, inhibited by Z-VAD-fmk, a well-known caspase inhibitor, which inhibits enzyme activity through covalent binding of the carbohydrate to the single Cys-306 residue. Its function is as follows. Specifically deglycosylates the denatured form of N-linked glycoproteins in the cytoplasm and assists their proteasome-mediated degradation. Cleaves the beta-aspartyl-glucosamine (GlcNAc) of the glycan and the amide side chain of Asn, converting Asn to Asp. Prefers proteins containing high-mannose over those bearing complex type oligosaccharides. Can recognize misfolded proteins in the endoplasmic reticulum that are exported to the cytosol to be destroyed and deglycosylate them, while it has no activity toward native proteins. Deglycosylation is a prerequisite for subsequent proteasome-mediated degradation of some, but not all, misfolded glycoproteins. The protein is Peptide-N(4)-(N-acetyl-beta-glucosaminyl)asparagine amidase (Ngly1) of Mus musculus (Mouse).